The primary structure comprises 198 residues: Glycerol-3-phosphate acyltransferase (198 aa).

5 helical membrane passes run 6–26 (FLPV…GLIL), 55–75 (GLAA…VIIS), 83–103 (AAMI…WLKF), 113–133 (IGIL…VWLA), and 154–174 (IVLW…LTLL).

It belongs to the PlsY family. As to quaternary structure, probably interacts with PlsX.

Its subcellular location is the cell inner membrane. The catalysed reaction is an acyl phosphate + sn-glycerol 3-phosphate = a 1-acyl-sn-glycero-3-phosphate + phosphate. The protein operates within lipid metabolism; phospholipid metabolism. Functionally, catalyzes the transfer of an acyl group from acyl-phosphate (acyl-PO(4)) to glycerol-3-phosphate (G3P) to form lysophosphatidic acid (LPA). This enzyme utilizes acyl-phosphate as fatty acyl donor, but not acyl-CoA or acyl-ACP. The sequence is that of Glycerol-3-phosphate acyltransferase from Bradyrhizobium sp. (strain BTAi1 / ATCC BAA-1182).